Reading from the N-terminus, the 339-residue chain is NADH-quinone oxidoreductase subunit H (339 aa).

Helical transmembrane passes span 9–29 (IFPLIIIALKVVAITIPLILC), 50–70 (PNVVGPFGLLQPIADAVKLLF), 82–102 (ILFILAPMITFILSLIGWAVI), 115–135 (VGVLYILAISSLSVYGIIIAG), 161–181 (MGLVIITVLLTTGTLNLSEII), 187–207 (IPWWIDLMLLPMGVVFFISVL), 235–255 (MGFALFFLGEYANMILVSAMT), 275–295 (IPGFFWFVFKVGFLLFCFLWI), and 311–331 (GWKVFLPLTLFWVVLVSSVLV).

The protein belongs to the complex I subunit 1 family. In terms of assembly, NDH-1 is composed of 14 different subunits. Subunits NuoA, H, J, K, L, M, N constitute the membrane sector of the complex.

It is found in the cell inner membrane. The catalysed reaction is a quinone + NADH + 5 H(+)(in) = a quinol + NAD(+) + 4 H(+)(out). In terms of biological role, NDH-1 shuttles electrons from NADH, via FMN and iron-sulfur (Fe-S) centers, to quinones in the respiratory chain. The immediate electron acceptor for the enzyme in this species is believed to be ubiquinone. Couples the redox reaction to proton translocation (for every two electrons transferred, four hydrogen ions are translocated across the cytoplasmic membrane), and thus conserves the redox energy in a proton gradient. This subunit may bind ubiquinone. In Rickettsia rickettsii (strain Iowa), this protein is NADH-quinone oxidoreductase subunit H.